We begin with the raw amino-acid sequence, 156 residues long: CD-NTase/cGAS isopeptidase (156 aa).

Positions 9–147 (IDDFDNHVVI…WIGKKIKNDI (139 aa)) constitute an MPN domain. E38 (proton donor/acceptor) is an active-site residue. Residues H100, H102, and D113 each coordinate Zn(2+). The short motif at 100–113 (HTHPEDFPHPSFID) is the JAMM motif element.

Belongs to the peptidase M67B family. Cap3 isopeptidase subfamily.

Functionally, metalloprotease priming reversal component of a CBASS antivirus system. CBASS (cyclic oligonucleotide-based antiphage signaling system) provides immunity against bacteriophages. The CD-NTase protein (DncV) synthesizes cyclic nucleotides in response to infection; these serve as specific second messenger signals. The signals activate a diverse range of effectors, leading to bacterial cell death and thus abortive phage infection. A type II-A(GA) CBASS system. Reverses the primed state of DncV, the CD-NTase, cleaving it from cellular proteins. Cleaves a Sumo-DncV-DncV fusion protein precisely between the 2 DncV moieties. Its function is as follows. Protects E.coli against phage infection. When capV and dncV are introduced in E.coli MG1655 there is 1000-fold protection against phage P1; protection against other phage (T4, T5 and T6) requires the 2 subsequent genes. In another paper the capV-dncV-cap2-cap3 operon gives 10(4)-10(5)-fold protection against phages lambda, T2, T4 and T6, about 1000-fold protection against P1 and 10-fold protection against T5. The polypeptide is CD-NTase/cGAS isopeptidase (Escherichia coli (strain TW11681)).